We begin with the raw amino-acid sequence, 244 residues long: Flavin-dependent thymidylate synthase (244 aa).

Positions 17–239 (ITVELVKHSA…PETHAAFEKQ (223 aa)) constitute a ThyX domain. FAD-binding positions include serine 68, 91 to 93 (RHR), and glutamate 99. Residues 88-91 (EFMR), 99-103 (EESGR), and arginine 171 contribute to the dUMP site. The ThyX motif signature appears at 91-101 (RHRIASYNEES). Residues 187–189 (NAR) and asparagine 193 contribute to the FAD site. Arginine 198 contributes to the dUMP binding site. Catalysis depends on arginine 198, which acts as the Involved in ionization of N3 of dUMP, leading to its activation.

The protein belongs to the thymidylate synthase ThyX family. As to quaternary structure, homotetramer. Requires FAD as cofactor.

It catalyses the reaction dUMP + (6R)-5,10-methylene-5,6,7,8-tetrahydrofolate + NADPH + H(+) = dTMP + (6S)-5,6,7,8-tetrahydrofolate + NADP(+). It participates in pyrimidine metabolism; dTTP biosynthesis. Functionally, catalyzes the reductive methylation of 2'-deoxyuridine-5'-monophosphate (dUMP) to 2'-deoxythymidine-5'-monophosphate (dTMP) while utilizing 5,10-methylenetetrahydrofolate (mTHF) as the methyl donor, and NADPH and FADH(2) as the reductant. The sequence is that of Flavin-dependent thymidylate synthase from Tropheryma whipplei (strain Twist) (Whipple's bacillus).